The chain runs to 831 residues: Periplasmic nitrate reductase (831 aa).

The tat-type signal signal peptide spans 1-29; sequence MKISRRDFIKQTAITATASVAGVTLPAGA. The 4Fe-4S Mo/W bis-MGD-type domain maps to 41–97; it reads LKWSKAPCRFCGTGCGVTVAVKDNKVVATQGDPQAEVNKGLNCVKGYFLSKIMYGQD. Cys48, Cys51, Cys55, and Cys83 together coordinate [4Fe-4S] cluster. Mo-bis(molybdopterin guanine dinucleotide) is bound by residues Lys85, Gln152, Asn177, Cys181, 214 to 221, 245 to 249, 264 to 266, Met375, Gln379, Asn485, 511 to 512, Lys534, Asp561, and 721 to 730; these read WGSNMAEM, STFTH, QTD, SD, and TGRVLEHWHS. Residue Trp797 coordinates substrate. Residues Asn805 and Lys822 each coordinate Mo-bis(molybdopterin guanine dinucleotide).

This sequence belongs to the prokaryotic molybdopterin-containing oxidoreductase family. NasA/NapA/NarB subfamily. As to quaternary structure, component of the periplasmic nitrate reductase NapAB complex composed of NapA and NapB. It depends on [4Fe-4S] cluster as a cofactor. Mo-bis(molybdopterin guanine dinucleotide) is required as a cofactor. Post-translationally, predicted to be exported by the Tat system. The position of the signal peptide cleavage has been experimentally proven.

The protein localises to the periplasm. The catalysed reaction is 2 Fe(II)-[cytochrome] + nitrate + 2 H(+) = 2 Fe(III)-[cytochrome] + nitrite + H2O. Catalytic subunit of the periplasmic nitrate reductase complex NapAB. Receives electrons from NapB and catalyzes the reduction of nitrate to nitrite. The sequence is that of Periplasmic nitrate reductase from Cupriavidus necator (strain ATCC 17699 / DSM 428 / KCTC 22496 / NCIMB 10442 / H16 / Stanier 337) (Ralstonia eutropha).